A 1333-amino-acid polypeptide reads, in one-letter code: MDTNWLYVLLQKSTADPLERLKLGNVILNEISQRKVSPHPKLVNDFLDVMSGWLTGSNFKVTIIGLEILDAALRTSPEVLASYYFDRLSVLIERMGDAKVQVREMAINLCRQLAYLENSSPVMLLDRLCVHGTGFEHKQWLVKVGSLNILRDFLSDSFALVIPQAINLIPQLCRLTNDPNSEVRDASTNCLVDLMVFGGKSIIAKIANTRILNEQKMATLLQRYESTIATRGDLPPKHSIPIETSSIPRNNLLRRSLRSPAKIIHPSASTTSFTSSARLSTPPRTNAPSLSPSPSTPSPLSLPAANGRSRDLARSSLRAPAGMSLSRYRSSSCAPAAQCAITLDDFKKAFNAVPKISIYSNSDVREKLETANSVLRNANEDWSKRANQLKLIRSVILNSDDSIDQRLLLSLINELADALEFSIRDLRSQIVREAAITCSFLFEHFGMDVRNVAECVLPAALAQVAVSTKIMASSAATLTVFIVQKIQTRQIFQTLFDLSTSKSKEQRRQLANLLETLISSWDLKVKQPILKSISQLVQNAICDADGETRVAGRKAFAKLEQLHGAAADQIFRELDPAKQKMLRDGVSSSSSSLNSDRDNNNQKQPQQPQQNISQKFLSQRSASALDNKSQVLSIAKPQQSNPSRPTAMPVNNRLPKSSTSSSFSAVRSSGYGQSRAKTPSDGFGGTNFNNNNNNNNKSSSSSPSTSTHQTPIQRVASNLGSSSFVASLTQEQASSLQNAMDLAKDEMSKNNEDDEFLLAEVRKTPPKETSPPASLYARGYGNGSNGSNNSSNNSIQSVEHILKACTSSSINEKRDAIISLSQKLLDRNLDSLECKNIGDTLSRLLAEGNTTLIISILETISIFVKCHYKKLDGWLKLALGKLFAKMGADSLPNVKSALSSTQKMFLTTFDPSTQLKEVCDFMCDPVHLLAPKSRLALLEYICLLFEEIWPEDPRCLERQTQLDTPYTRAAVRKMFAWMFDPRIGAILMPACERLVCALFALNAADFTMIFGDLPPECRDWAYRILQLNGQQQSAQRQQIMEKEAITMTNNNYKPCPPEVEKFEKVSVKASFSTYEATRVPEPQDYRKPTVHLAKNHVEQAAYIRNQMDLMRDFQKPDRVNEAMANLHGMMCEGSFTLWNQFFDELLDEIYQILSTLSQSIRKKLAMRILQKMCTAQATKLFDSTEIAISKVLQCACTSEDNTMSVAAEDCLRILATHLPLPRIVQISRRILSQDDDDQRGVLILKMLTRMFQDIDVDELHMIVDDVAPCFVSAYDSTSSSVRKCAVFGLVALVQRVGMPRLETHLRKLNATKLNLIDLYVGRAKSSESGTSSN.

One copy of the HEAT 1 repeat lies at 168 to 206 (LIPQLCRLTNDPNSEVRDASTNCLVDLMVFGGKSIIAKI). Low complexity predominate over residues 269–305 (STTSFTSSARLSTPPRTNAPSLSPSPSTPSPLSLPAA). Positions 269-311 (STTSFTSSARLSTPPRTNAPSLSPSPSTPSPLSLPAANGRSRD) are disordered. Residues 360-389 (SNSDVREKLETANSVLRNANEDWSKRANQL) adopt a coiled-coil conformation. Disordered stretches follow at residues 579–711 (QKML…HQTP) and 764–792 (TPPKETSPPASLYARGYGNGSNGSNNSSN). A compositionally biased stretch (low complexity) spans 601–611 (NQKQPQQPQQN). Residues 612–644 (ISQKFLSQRSASALDNKSQVLSIAKPQQSNPSR) are compositionally biased toward polar residues. Composition is skewed to low complexity over residues 657 to 669 (SSTSSSFSAVRSS) and 686 to 707 (TNFNNNNNNNNKSSSSSPSTST). The stretch at 1266–1304 (VAPCFVSAYDSTSSSVRKCAVFGLVALVQRVGMPRLETH) is one HEAT 2 repeat.

It belongs to the CLASP family.

It localises to the cytoplasm. Its subcellular location is the cytoskeleton. In terms of biological role, microtubule plus-end tracking protein that promotes the stabilization of dynamic microtubules. This is Protein CLASP-1 from Caenorhabditis briggsae.